We begin with the raw amino-acid sequence, 196 residues long: Neurensin-1 (196 aa).

Helical transmembrane passes span 67–87 (LISG…GFLV) and 121–141 (AVLF…SVFA).

The protein belongs to the VMP family. Expressed predominantly in brain. Also weakly expressed in lung and spleen. In brain, expressed strongly in nerve fibers of the cerebral cortex, anterior cerebral nuclei, hypothalamus, amygdaloid complex, brain stem of the metaencephalon and medulla oblongata, and moderately expressed in soma of neurons of the dentate gyrus of the hippocampus and Purkinje cells of the cerebellum.

It is found in the membrane. Its subcellular location is the cell projection. The protein resides in the neuron projection. Functionally, may play an important role in neural organelle transport, and in transduction of nerve signals or in nerve growth. May play a role in neurite extension. The sequence is that of Neurensin-1 from Mus musculus (Mouse).